The sequence spans 334 residues: L-lactate dehydrogenase B chain (334 aa).

A2 carries the N-acetylalanine modification. K7 carries the N6-acetyllysine modification. 31–53 (QVGMACAISILGKSLADELALVD) contacts NAD(+). S44 carries the phosphoserine modification. Residue K58 is modified to N6-acetyllysine. Position 100 (R100) interacts with NAD(+). R107 is a binding site for substrate. The residue at position 119 (K119) is an N6-acetyllysine. N139 contributes to the NAD(+) binding site. Positions 139 and 170 each coordinate substrate. Residue H194 is the Proton acceptor of the active site. Position 240 is a phosphotyrosine (Y240). Residue T249 coordinates substrate. At K329 the chain carries N6-acetyllysine.

Belongs to the LDH/MDH superfamily. LDH family. Homotetramer. Interacts with PTEN upstream reading frame protein MP31; the interaction leads to inhibition of mitochondrial lactate dehydrogenase activity, preventing conversion of lactate to pyruvate in mitochondria. Predominantly expressed in aerobic tissues such as cardiac muscle.

The protein localises to the cytoplasm. It localises to the mitochondrion inner membrane. The enzyme catalyses (S)-lactate + NAD(+) = pyruvate + NADH + H(+). Its pathway is fermentation; pyruvate fermentation to lactate; (S)-lactate from pyruvate: step 1/1. Interconverts simultaneously and stereospecifically pyruvate and lactate with concomitant interconversion of NADH and NAD(+). The chain is L-lactate dehydrogenase B chain (LDHB) from Homo sapiens (Human).